The following is a 381-amino-acid chain: Cytosolic acyl coenzyme A thioester hydrolase (381 aa).

One can recognise a HotDog ACOT-type 1 domain in the interval 51 to 169 (PGHCIAMGRI…TLWYVPLSLK (119 aa)). Residue N67 is part of the active site. Residues K169 and K199 each carry the N6-acetyllysine modification. A HotDog ACOT-type 2 domain is found at 225–339 (SYSQSSLIHL…FFTYVSLNQE (115 aa)). Residue D256 is part of the active site. The residue at position 284 (K284) is an N6-acetyllysine. The disordered stretch occupies residues 343-381 (LPVPQLVPETEDEKKRFEEGKGRYLQMKAKRQGHTEPQP). The segment covering 354–364 (DEKKRFEEGKG) has biased composition (basic and acidic residues).

As to quaternary structure, homohexamer. The N-terminus is blocked. Isoform 1 is expressed constitutively in brain and testis. Isoform 2 is induced in liver by treatment with the peroxisome proliferator.

It localises to the cytoplasm. The protein localises to the cytosol. The catalysed reaction is hexadecanoyl-CoA + H2O = hexadecanoate + CoA + H(+). It catalyses the reaction dodecanoyl-CoA + H2O = dodecanoate + CoA + H(+). The enzyme catalyses tetradecanoyl-CoA + H2O = tetradecanoate + CoA + H(+). It carries out the reaction decanoyl-CoA + H2O = decanoate + CoA + H(+). The catalysed reaction is octanoyl-CoA + H2O = octanoate + CoA + H(+). It catalyses the reaction octadecanoyl-CoA + H2O = octadecanoate + CoA + H(+). The enzyme catalyses (9Z)-octadecenoyl-CoA + H2O = (9Z)-octadecenoate + CoA + H(+). Its pathway is lipid metabolism; fatty acid metabolism. Catalyzes the hydrolysis of acyl-CoAs into free fatty acids and coenzyme A (CoASH), regulating their respective intracellular levels. Preferentially hydrolyzes palmitoyl-CoA, but has a broad specificity acting on other fatty acyl-CoAs with chain-lengths of C8-C18. May play an important physiological function in brain. This chain is Cytosolic acyl coenzyme A thioester hydrolase (Acot7), found in Rattus norvegicus (Rat).